The primary structure comprises 485 residues: Pyruvate kinase (485 aa).

Arg-33 is a substrate binding site. Positions 35, 37, 67, and 68 each coordinate K(+). 35-38 (NFSH) lines the ATP pocket. ATP is bound by residues Arg-74 and Lys-155. Glu-221 contacts Mg(2+). Gly-244, Asp-245, and Thr-277 together coordinate substrate. Asp-245 is a Mg(2+) binding site.

Belongs to the pyruvate kinase family. In terms of assembly, homotetramer. Mg(2+) is required as a cofactor. Requires K(+) as cofactor.

It carries out the reaction pyruvate + ATP = phosphoenolpyruvate + ADP + H(+). It functions in the pathway carbohydrate degradation; glycolysis; pyruvate from D-glyceraldehyde 3-phosphate: step 5/5. This is Pyruvate kinase (pyk) from Chlamydia trachomatis serovar D (strain ATCC VR-885 / DSM 19411 / UW-3/Cx).